The primary structure comprises 385 residues: Zinc finger protein B385R (385 aa).

The segment at 166-190 (LQCPNCGCIQELMGTIFDETHFYNH) adopts a C2H2-type zinc-finger fold.

This sequence belongs to the asfivirus B385R family.

This is Zinc finger protein B385R from Ornithodoros (relapsing fever ticks).